The primary structure comprises 566 residues: Sulfite reductase [NADPH] hemoprotein beta-component (566 aa).

Positions 430, 436, 475, and 479 each coordinate [4Fe-4S] cluster. Cys-479 provides a ligand contact to siroheme.

It belongs to the nitrite and sulfite reductase 4Fe-4S domain family. Alpha(8)-beta(8). The alpha component is a flavoprotein, the beta component is a hemoprotein. Siroheme serves as cofactor. It depends on [4Fe-4S] cluster as a cofactor.

The catalysed reaction is hydrogen sulfide + 3 NADP(+) + 3 H2O = sulfite + 3 NADPH + 4 H(+). Its pathway is sulfur metabolism; hydrogen sulfide biosynthesis; hydrogen sulfide from sulfite (NADPH route): step 1/1. In terms of biological role, component of the sulfite reductase complex that catalyzes the 6-electron reduction of sulfite to sulfide. This is one of several activities required for the biosynthesis of L-cysteine from sulfate. This chain is Sulfite reductase [NADPH] hemoprotein beta-component, found in Baumannia cicadellinicola subsp. Homalodisca coagulata.